The sequence spans 366 residues: Galactoside alpha-(1,2)-fucosyltransferase 1 (366 aa).

The Cytoplasmic portion of the chain corresponds to 1 to 8 (MWPLSHRH). A helical; Signal-anchor for type II membrane protein transmembrane segment spans residues 9–25 (LCLAFLLVCVLSAISFF). Residues 26 to 366 (LHIHQDSIRH…LSPLWTLAEP (341 aa)) are Lumenal-facing. Asparagine 66, asparagine 302, and asparagine 328 each carry an N-linked (GlcNAc...) asparagine glycan.

The protein belongs to the glycosyltransferase 11 family.

It is found in the golgi apparatus. Its subcellular location is the golgi stack membrane. The enzyme catalyses a beta-D-galactosyl-(1-&gt;4)-N-acetyl-beta-D-glucosaminyl derivative + GDP-beta-L-fucose = an alpha-L-Fuc-(1-&gt;2)-beta-D-Gal-(1-&gt;4)-beta-D-GlcNAc derivative + GDP + H(+). It catalyses the reaction a ganglioside GA1 + GDP-beta-L-fucose = a ganglioside Fuc-GA1 + GDP + H(+). It carries out the reaction a beta-D-Gal-(1-&gt;3)-beta-D-GlcNAc-(1-&gt;3)-beta-D-Gal-(1-&gt;4)-beta-D-Glc-(1&lt;-&gt;1')-Cer(d18:1(4E)) + GDP-beta-L-fucose = alpha-L-fucosyl-(1-&gt;2)- beta-D-galactosyl-(1-&gt;3)-N-acetyl-beta-D-glucosaminyl-(1-&gt;3)-beta-D-galactosyl-(1-&gt;4)-beta-D-glucosyl-(1&lt;-&gt;1')-N-acylsphing-4-enine + GDP + H(+). The catalysed reaction is a neolactoside nLc4Cer(d18:1(4E)) + GDP-beta-L-fucose = a neolactoside IV(2)-alpha-Fuc-nLc4Cer(d18:1(4E)) + GDP + H(+). The enzyme catalyses a ganglioside GM1 + GDP-beta-L-fucose = a ganglioside Fuc-GM1 + GDP + H(+). It catalyses the reaction beta-D-galactosyl-(1-&gt;3)-N-acetyl-D-galactosamine + GDP-beta-L-fucose = alpha-L-fucosyl-(1-&gt;2)-beta-D-galactosyl-(1-&gt;3)-N-acetyl-D-galactosamine + GDP + H(+). The protein operates within protein modification; protein glycosylation. In terms of biological role, catalyzes the transfer of L-fucose, from a guanosine diphosphate-beta-L-fucose, to the terminal galactose residue of glycoconjugates through an alpha(1,2) linkage leading to H antigen synthesis that is an intermediate substrate in the synthesis of ABO blood group antigens. H antigen is essential for maturation of the glomerular layer of the main olfactory bulb, in cell migration and early cell-cell contacts during tumor associated angiogenesis. Preferentially fucosylates soluble lactose and to a lesser extent fucosylates glycolipids gangliosides GA1 and GM1a. The protein is Galactoside alpha-(1,2)-fucosyltransferase 1 of Aotus nancymaae (Ma's night monkey).